Here is an 89-residue protein sequence, read N- to C-terminus: Small ribosomal subunit protein uS15 (89 aa).

Over residues 1–21 (MALSPEKKNEIIENFKTHEGD) the composition is skewed to basic and acidic residues. The segment at 1–23 (MALSPEKKNEIIENFKTHEGDTG) is disordered.

It belongs to the universal ribosomal protein uS15 family. As to quaternary structure, part of the 30S ribosomal subunit. Forms a bridge to the 50S subunit in the 70S ribosome, contacting the 23S rRNA.

In terms of biological role, one of the primary rRNA binding proteins, it binds directly to 16S rRNA where it helps nucleate assembly of the platform of the 30S subunit by binding and bridging several RNA helices of the 16S rRNA. Functionally, forms an intersubunit bridge (bridge B4) with the 23S rRNA of the 50S subunit in the ribosome. In Desulforamulus reducens (strain ATCC BAA-1160 / DSM 100696 / MI-1) (Desulfotomaculum reducens), this protein is Small ribosomal subunit protein uS15.